The following is a 439-amino-acid chain: 26S proteasome regulatory subunit 4 homolog (439 aa).

Positions 1 to 46 (MGNNQSQGQGDKGEKKDQPKYQPPPPPTQFGKKKKRRGAETSTKLP) are disordered. 225–232 (GEPGTGKT) is a binding site for ATP.

This sequence belongs to the AAA ATPase family.

Its subcellular location is the cytoplasm. The protein localises to the nucleus. Functionally, the 26S proteasome is involved in the ATP-dependent degradation of ubiquitinated proteins. The regulatory (or ATPase) complex confers ATP dependency and substrate specificity to the 26S complex. Plays an important role in regulating both growth and multicellular development. The polypeptide is 26S proteasome regulatory subunit 4 homolog (psmC1) (Dictyostelium discoideum (Social amoeba)).